We begin with the raw amino-acid sequence, 114 residues long: Large ribosomal subunit protein uL18 (114 aa).

The protein belongs to the universal ribosomal protein uL18 family. In terms of assembly, part of the 50S ribosomal subunit; part of the 5S rRNA/L5/L18/L25 subcomplex. Contacts the 5S and 23S rRNAs.

In terms of biological role, this is one of the proteins that bind and probably mediate the attachment of the 5S RNA into the large ribosomal subunit, where it forms part of the central protuberance. The protein is Large ribosomal subunit protein uL18 of Azobacteroides pseudotrichonymphae genomovar. CFP2.